A 336-amino-acid chain; its full sequence is Eukaryotic translation initiation factor 3 subunit I (336 aa).

6 WD repeats span residues 8 to 49, 50 to 91, 93 to 135, 144 to 183, 187 to 226, and 285 to 324; these read GHER…GTYN, GHNG…KAWE, PTAI…GPQP, PIGS…EVAS, NHIG…VIKS, and GGFG…FRAK.

The protein belongs to the eIF-3 subunit I family. Component of the eukaryotic translation initiation factor 3 (eIF-3) complex.

The protein localises to the cytoplasm. Functionally, component of the eukaryotic translation initiation factor 3 (eIF-3) complex, which is involved in protein synthesis of a specialized repertoire of mRNAs and, together with other initiation factors, stimulates binding of mRNA and methionyl-tRNAi to the 40S ribosome. The eIF-3 complex specifically targets and initiates translation of a subset of mRNAs involved in cell proliferation. The chain is Eukaryotic translation initiation factor 3 subunit I from Puccinia graminis f. sp. tritici (strain CRL 75-36-700-3 / race SCCL) (Black stem rust fungus).